We begin with the raw amino-acid sequence, 158 residues long: Transcriptional regulator MraZ (158 aa).

2 consecutive SpoVT-AbrB domains span residues 5 to 50 (IYET…GGVY) and 91 to 134 (AVEC…SQSE).

Belongs to the MraZ family. Forms oligomers.

It is found in the cytoplasm. The protein localises to the nucleoid. In Geobacter metallireducens (strain ATCC 53774 / DSM 7210 / GS-15), this protein is Transcriptional regulator MraZ.